Reading from the N-terminus, the 264-residue chain is Small ribosomal subunit protein eS1 (264 aa).

An N6-acetyllysine; alternate modification is found at Lys34. Lys34 is covalently cross-linked (Glycyl lysine isopeptide (Lys-Gly) (interchain with G-Cter in SUMO2); alternate). Lys56 carries the N6-acetyllysine modification. Residue Tyr155 is modified to ADP-ribosyltyrosine. A disordered region spans residues 233-264 (GEGSSSGKATGDETGAKVERADGYEPPVQESV). Ser236 and Ser237 each carry phosphoserine. The segment covering 242–255 (TGDETGAKVERADG) has biased composition (basic and acidic residues). Lys249 is subject to N6-acetyllysine; alternate. A Glycyl lysine isopeptide (Lys-Gly) (interchain with G-Cter in SUMO2); alternate cross-link involves residue Lys249. Tyr256 is subject to Phosphotyrosine. Phosphoserine is present on Ser263.

The protein belongs to the eukaryotic ribosomal protein eS1 family. In terms of assembly, component of the small ribosomal subunit. Mature ribosomes consist of a small (40S) and a large (60S) subunit. The 40S subunit contains about 33 different proteins and 1 molecule of RNA (18S). The 60S subunit contains about 49 different proteins and 3 molecules of RNA (28S, 5.8S and 5S). Part of the small subunit (SSU) processome, composed of more than 70 proteins and the RNA chaperone small nucleolar RNA (snoRNA) U3. ADP-ribosylated at Tyr-155 by PARP1 in presence of HPF1.

Its subcellular location is the cytoplasm. The protein resides in the nucleus. It localises to the nucleolus. Functionally, component of the small ribosomal subunit. The ribosome is a large ribonucleoprotein complex responsible for the synthesis of proteins in the cell. Part of the small subunit (SSU) processome, first precursor of the small eukaryotic ribosomal subunit. During the assembly of the SSU processome in the nucleolus, many ribosome biogenesis factors, an RNA chaperone and ribosomal proteins associate with the nascent pre-rRNA and work in concert to generate RNA folding, modifications, rearrangements and cleavage as well as targeted degradation of pre-ribosomal RNA by the RNA exosome. May play a role during erythropoiesis. This chain is Small ribosomal subunit protein eS1, found in Callithrix jacchus (White-tufted-ear marmoset).